A 216-amino-acid chain; its full sequence is Kynurenine formamidase (216 aa).

Substrate is bound at residue phenylalanine 21. Residues histidine 51, histidine 55, and aspartate 57 each coordinate Zn(2+). The active-site Proton donor/acceptor is the histidine 61. Zn(2+) is bound by residues histidine 167 and glutamate 179.

This sequence belongs to the Cyclase 1 superfamily. KynB family. As to quaternary structure, homodimer. Zn(2+) is required as a cofactor.

The enzyme catalyses N-formyl-L-kynurenine + H2O = L-kynurenine + formate + H(+). It participates in amino-acid degradation; L-tryptophan degradation via kynurenine pathway; L-kynurenine from L-tryptophan: step 2/2. In terms of biological role, catalyzes the hydrolysis of N-formyl-L-kynurenine to L-kynurenine, the second step in the kynurenine pathway of tryptophan degradation. The chain is Kynurenine formamidase from Paracidovorax citrulli (strain AAC00-1) (Acidovorax citrulli).